Consider the following 552-residue polypeptide: Transcription factor kayak (552 aa).

Disordered regions lie at residues 110–145 and 177–234; these read LAQG…TDST and GAAS…KRRV. Polar residues predominate over residues 111-127; sequence AQGSDSEDSNASYNDTQ. The segment covering 135-145 has biased composition (low complexity); sequence TDTSSAHTDST. The span at 177–192 shows a compositional bias: polar residues; sequence GAASVGSSNANTSNTP. Residues 212–275 form the bZIP domain; the sequence is EQKRAVRRER…NQLEYCLAAH (64 aa). Residues 214–233 are basic motif; the sequence is KRAVRRERNKQAAARCRKRR. The segment at 240-247 is leucine-zipper; it reads LTEEVEQL. The span at 304–325 shows a compositional bias: low complexity; the sequence is AGSSGSGASSHHNHNSNDSSNG. Disordered regions lie at residues 304 to 346, 365 to 390, and 514 to 552; these read AGSS…PLDL, LDGA…TLPP, and GGTG…LVSL. A compositionally biased stretch (polar residues) spans 333–343; it reads TLNSTGRSNSP. Ser-342 bears the Phosphoserine mark.

Belongs to the bZIP family. Fos subfamily. Homodimer. Heterodimer with Jra. The kay-Jra heterodimer binds more stably to the AP-1 site than either of the two proteins alone.

The protein resides in the nucleus. Its function is as follows. Developmentally regulated transcription factor AP-1 binds and recognizes the enhancer DNA sequence: 5'-TGA[CG]TCA-3'. May play a role in the function or determination of a particular subset of cells in the developing embryo. It is able to carry out its function either independently of or in conjunction with Jra. This Drosophila yakuba (Fruit fly) protein is Transcription factor kayak.